A 356-amino-acid polypeptide reads, in one-letter code: Alanine racemase, catabolic (356 aa).

K35 serves as the catalytic Proton acceptor; specific for D-alanine. Residue K35 is modified to N6-(pyridoxal phosphate)lysine. R130 contacts substrate. Catalysis depends on Y253, which acts as the Proton acceptor; specific for L-alanine. Residue M301 participates in substrate binding.

It belongs to the alanine racemase family. Requires pyridoxal 5'-phosphate as cofactor.

It carries out the reaction L-alanine = D-alanine. Functionally, isomerizes L-alanine to D-alanine which is then oxidized to pyruvate by DadA. The chain is Alanine racemase, catabolic (dadX) from Salmonella typhi.